The primary structure comprises 143 residues: Nucleoside diphosphate kinase (143 aa).

The 132-residue stretch at 1–132 (MVKPDGVQRG…LWFSPQELCQ (132 aa)) folds into the NDPK-like domain. Residues K3, F51, R79, T85, R96, V103, and N106 each coordinate ADP. Residues K3, F51, R79, T85, and R96 each coordinate ATP. N106 is a binding site for ATP. H109 serves as the catalytic Pros-phosphohistidine intermediate.

Belongs to the NDK family. As to quaternary structure, homohexamer. Mg(2+) serves as cofactor.

The catalysed reaction is a 2'-deoxyribonucleoside 5'-diphosphate + ATP = a 2'-deoxyribonucleoside 5'-triphosphate + ADP. The enzyme catalyses a ribonucleoside 5'-diphosphate + ATP = a ribonucleoside 5'-triphosphate + ADP. It carries out the reaction GDP + ATP = GTP + ADP. Its pathway is purine metabolism; purine nucleotide biosynthesis. In terms of biological role, major role in the synthesis of nucleoside triphosphates other than ATP. The ATP gamma phosphate is transferred to the NDP beta phosphate via a ping-pong mechanism, using a phosphorylated active-site intermediate. This is Nucleoside diphosphate kinase from Schistosoma mansoni (Blood fluke).